Consider the following 93-residue polypeptide: MKTFVLLSALVLLAFQVQADPIHKTDEETNTEEQPGEEDQAVSISFGGQEGSALHEELSKKLICYCRIRGCKRRERVFGTCRNLFLTFVFCCS.

Positions 1-19 (MKTFVLLSALVLLAFQVQA) are cleaved as a signal peptide. The propeptide occupies 20–58 (DPIHKTDEETNTEEQPGEEDQAVSISFGGQEGSALHEEL). Cystine bridges form between Cys-64-Cys-92, Cys-66-Cys-81, and Cys-71-Cys-91.

The protein belongs to the alpha-defensin family.

It localises to the secreted. In terms of biological role, probably contributes to the antimicrobial barrier function of the small bowel mucosa. The chain is Alpha-defensin 5 (Defa5) from Mus musculus (Mouse).